The following is a 620-amino-acid chain: Aspartic protease 1 (620 aa).

At 1–110 the chain is on the cytoplasmic side; sequence MSPSSRFRNL…LGKAVGLSTS (110 aa). The propeptide occupies 1 to 258; that stretch reads MSPSSRFRNL…SKKDDGNLSG (258 aa). The tract at residues 27 to 31 is important for proper cellular trafficking; it reads YASLL. Residues 111–131 form a helical; Signal-anchor for type II membrane protein membrane-spanning segment; it reads VICVVALFGIVCLCLYGLVNF. Residues 132-620 lie on the Lumenal side of the membrane; sequence SFTSVETSPL…KQIGFARLKN (489 aa). Residues 138–174 are disordered; the sequence is TSPLDDPRNSPVMGELGNPQASTPSSARADTPARHDR. The span at 156–165 shows a compositional bias: polar residues; it reads PQASTPSSAR. Residues 275 to 616 form the Peptidase A1 domain; that stretch reads YYTEIYVGSP…DYDNKQIGFA (342 aa). Catalysis depends on residues Asp-293 and Asp-476. Cys-513 and Cys-550 are disulfide-bonded.

The protein belongs to the peptidase A1 family. Post-translationally, proteolytically cleaved into the soluble active mature form by, at least, cysteine protease CPL. Undergoes at least four processing steps; the first cleavage removes the propeptide resulting in the production of a soluble 45 kDa protein, which is further processed into a 35 kDa form followed by an additional processing into the final active 30 kDa form.

Its subcellular location is the membrane. It localises to the vacuole. Functionally, aspartyl protease which is dispensable for protein degradation in the vacuolar compartment (VAC) or for tachyzoite and bradyzoite viability. The polypeptide is Aspartic protease 1 (Toxoplasma gondii).